The primary structure comprises 267 residues: Undecaprenyl-diphosphatase (267 aa).

The next 8 helical transmembrane spans lie at 1 to 21, 39 to 59, 83 to 103, 111 to 131, 149 to 169, 189 to 209, 218 to 238, and 245 to 265; these read MSYFESFILALIQGFTEFLPI, QGLAFDVAVHVGTLAAVVLYF, AKLAWLIVLATIPACLFGFVM, LRSAWVIATTTIVFGLLLWYV, ALFIGLAQAVAIIPGTSRSGA, FLMSIPIIVLAGSYLGLKLVT, FLLTGIITSFISAYICIHFFL, and GMTPFVIYRLVLGVGLFAFLL.

It belongs to the UppP family.

The protein localises to the cell inner membrane. The catalysed reaction is di-trans,octa-cis-undecaprenyl diphosphate + H2O = di-trans,octa-cis-undecaprenyl phosphate + phosphate + H(+). In terms of biological role, catalyzes the dephosphorylation of undecaprenyl diphosphate (UPP). Confers resistance to bacitracin. The polypeptide is Undecaprenyl-diphosphatase (Vibrio cholerae serotype O1 (strain ATCC 39315 / El Tor Inaba N16961)).